Reading from the N-terminus, the 413-residue chain is MARLAPDGAQFDARQYDSKMNDLLAADGKDFFTSYDEVYDSFDAMGLQENLLRGIYAYGFEKPSAIQQRGIVPFCKGLDVIQQAQSGTGKTATFCSGILQQLDYGLVQCQALVLAPTRELAQQIEKVMRALGDYLGVKVHACVGGTSVREDQRILAAGVHVIVGTPGRVFDMLRRQSLRPDYLRMFVLDEADEMLSRGFKDQIYDIFQMLPTKVQVGVFSATMPPEALDITRKFMNKPVRILVKRDELTLEGIKQFYVNVDKEEWKLETLCDLYETLAITQSVIFVNTRRKVDWLTDKMRTRDHTVSATHGDMDQNTRDIIMREFRSGSSRVLITTDLLARGIDVQQVSLVINYDLPTQPENYLHRIGRSGRFGRKGVAINFVTTDDERMLFDIQKFYNVIIEELPSNVADLL.

Positions 40–68 (DSFDAMGLQENLLRGIYAYGFEKPSAIQQ) match the Q motif motif. The region spanning 71-241 (IVPFCKGLDV…RKFMNKPVRI (171 aa)) is the Helicase ATP-binding domain. 84–91 (AQSGTGKT) contacts ATP. A DEAD box motif is present at residues 189 to 192 (DEAD). Residues 252 to 413 (GIKQFYVNVD…ELPSNVADLL (162 aa)) form the Helicase C-terminal domain.

Belongs to the DEAD box helicase family. eIF4A subfamily. EIF4F is a multi-subunit complex, the composition of which varies with external and internal environmental conditions. It is composed of at least EIF4A, EIF4E and EIF4G. In terms of tissue distribution, pollen specific.

The enzyme catalyses ATP + H2O = ADP + phosphate + H(+). In terms of biological role, ATP-dependent RNA helicase which is a subunit of the eIF4F complex involved in cap recognition and is required for mRNA binding to ribosome. In the current model of translation initiation, eIF4A unwinds RNA secondary structures in the 5'-UTR of mRNAs which is necessary to allow efficient binding of the small ribosomal subunit, and subsequent scanning for the initiator codon. This Nicotiana tabacum (Common tobacco) protein is Eukaryotic initiation factor 4A-8.